A 290-amino-acid polypeptide reads, in one-letter code: MKSLKELSLRIKNIRSVQKTTKIMQMVSAAKLLQSQKKLSNSKLYISKLHDIISSIMSSADQELLAKIFTTGDNDSYLVFIIASDRGLCGSFNSSIAKSSQEYVNKLIASSKKVDIVFLGKKAFDIGKNRFDSKSILKIENSKGITLKRVEALVDSMDLSKYDRIKVFYNKFYNTFTQKPMLETIKPWSKSSSLIDDYLTNSTIDYNYKYEPQNTEFILRSLIQNYVVTALYSALLESAASENSARMAAMESANRNTKEMLNKLALLYNCSRQAAITTDLIEVIGGAESL.

This sequence belongs to the ATPase gamma chain family. F-type ATPases have 2 components, CF(1) - the catalytic core - and CF(0) - the membrane proton channel. CF(1) has five subunits: alpha(3), beta(3), gamma(1), delta(1), epsilon(1). CF(0) has three main subunits: a, b and c.

It is found in the cell membrane. In terms of biological role, produces ATP from ADP in the presence of a proton gradient across the membrane. The gamma chain is believed to be important in regulating ATPase activity and the flow of protons through the CF(0) complex. The chain is ATP synthase gamma chain from Wolbachia sp. subsp. Brugia malayi (strain TRS).